The chain runs to 180 residues: Alkyl hydroperoxide reductase AhpD (180 aa).

Cysteine 131 functions as the Proton donor in the catalytic mechanism. A disulfide bond links cysteine 131 and cysteine 134. Catalysis depends on cysteine 134, which acts as the Cysteine sulfenic acid (-SOH) intermediate.

Belongs to the AhpD family.

The enzyme catalyses N(6)-[(R)-dihydrolipoyl]-L-lysyl-[lipoyl-carrier protein] + a hydroperoxide = N(6)-[(R)-lipoyl]-L-lysyl-[lipoyl-carrier protein] + an alcohol + H2O. Functionally, antioxidant protein with alkyl hydroperoxidase activity. Required for the reduction of the AhpC active site cysteine residues and for the regeneration of the AhpC enzyme activity. This is Alkyl hydroperoxide reductase AhpD from Hyphomonas neptunium (strain ATCC 15444).